Here is a 377-residue protein sequence, read N- to C-terminus: Nitric oxide reductase FlRd-NAD(+) reductase (377 aa).

The protein belongs to the FAD-dependent oxidoreductase family. FAD serves as cofactor.

The protein resides in the cytoplasm. The enzyme catalyses 2 reduced [nitric oxide reductase rubredoxin domain] + NAD(+) + H(+) = 2 oxidized [nitric oxide reductase rubredoxin domain] + NADH. Its pathway is nitrogen metabolism; nitric oxide reduction. One of at least two accessory proteins for anaerobic nitric oxide (NO) reductase. Reduces the rubredoxin moiety of NO reductase. The polypeptide is Nitric oxide reductase FlRd-NAD(+) reductase (Escherichia coli O127:H6 (strain E2348/69 / EPEC)).